The sequence spans 203 residues: MIGKLSGRVDSSYDDYVIIDVSGVGYRVFASAKTLSKLSEGESYKLFIETHVREDHINLYGFLSLEEKSFFNLLQSVNGIGTRMALSILSALTPTDIQIAINNEDKNIFKAISGVGAKLAERIVRELSDKVAKISSSSAAIKDSLNIKGITPVASSEVIKALINMGFSRFEAQNAVQEIITKNPEISIDELIRTALKNRNSNF.

The segment at 1-63 (MIGKLSGRVD…EDHINLYGFL (63 aa)) is domain I. Residues 64–142 (SLEEKSFFNL…KISSSSAAIK (79 aa)) form a domain II region. The segment at 143 to 149 (DSLNIKG) is flexible linker. Residues 150 to 203 (ITPVASSEVIKALINMGFSRFEAQNAVQEIITKNPEISIDELIRTALKNRNSNF) are domain III.

Belongs to the RuvA family. In terms of assembly, homotetramer. Forms an RuvA(8)-RuvB(12)-Holliday junction (HJ) complex. HJ DNA is sandwiched between 2 RuvA tetramers; dsDNA enters through RuvA and exits via RuvB. An RuvB hexamer assembles on each DNA strand where it exits the tetramer. Each RuvB hexamer is contacted by two RuvA subunits (via domain III) on 2 adjacent RuvB subunits; this complex drives branch migration. In the full resolvosome a probable DNA-RuvA(4)-RuvB(12)-RuvC(2) complex forms which resolves the HJ.

The protein resides in the cytoplasm. The RuvA-RuvB-RuvC complex processes Holliday junction (HJ) DNA during genetic recombination and DNA repair, while the RuvA-RuvB complex plays an important role in the rescue of blocked DNA replication forks via replication fork reversal (RFR). RuvA specifically binds to HJ cruciform DNA, conferring on it an open structure. The RuvB hexamer acts as an ATP-dependent pump, pulling dsDNA into and through the RuvAB complex. HJ branch migration allows RuvC to scan DNA until it finds its consensus sequence, where it cleaves and resolves the cruciform DNA. In Rickettsia bellii (strain OSU 85-389), this protein is Holliday junction branch migration complex subunit RuvA.